Here is a 119-residue protein sequence, read N- to C-terminus: Flagellar transcriptional regulator FlhD (119 aa).

The protein belongs to the FlhD family. In terms of assembly, homodimer; disulfide-linked. Forms a heterohexamer composed of two FlhC and four FlhD subunits. Each FlhC binds a FlhD dimer, forming a heterotrimer, and a hexamer assembles by dimerization of two heterotrimers.

The protein resides in the cytoplasm. In terms of biological role, functions in complex with FlhC as a master transcriptional regulator that regulates transcription of several flagellar and non-flagellar operons by binding to their promoter region. Activates expression of class 2 flagellar genes, including fliA, which is a flagellum-specific sigma factor that turns on the class 3 genes. Also regulates genes whose products function in a variety of physiological pathways. In Shigella dysenteriae serotype 1 (strain Sd197), this protein is Flagellar transcriptional regulator FlhD.